Consider the following 130-residue polypeptide: Succinate dehydrogenase assembly factor 3, mitochondrial (130 aa).

Residues 1 to 8 (MRPSLLRL) constitute a mitochondrion transit peptide.

It belongs to the complex I LYR family. SDHAF3 subfamily. Interacts with the iron-sulfur protein subunit within the SDH catalytic dimer.

The protein resides in the mitochondrion matrix. Plays an essential role in the assembly of succinate dehydrogenase (SDH), an enzyme complex (also referred to as respiratory complex II) that is a component of both the tricarboxylic acid (TCA) cycle and the mitochondrial electron transport chain, and which couples the oxidation of succinate to fumarate with the reduction of ubiquinone (coenzyme Q) to ubiquinol. Promotes maturation of the iron-sulfur protein subunit of the SDH catalytic dimer, protecting it from the deleterious effects of oxidants. May act together with SDHAF1. The sequence is that of Succinate dehydrogenase assembly factor 3, mitochondrial from Gibberella zeae (strain ATCC MYA-4620 / CBS 123657 / FGSC 9075 / NRRL 31084 / PH-1) (Wheat head blight fungus).